The chain runs to 324 residues: Ribose 1,5-bisphosphate isomerase (324 aa).

Substrate-binding positions include 22–25 (RGAG) and Arg-65. Cys-135 functions as the Proton acceptor in the catalytic mechanism. 137 to 139 (SKA) provides a ligand contact to substrate. Asp-204 functions as the Proton donor in the catalytic mechanism. Lys-240 provides a ligand contact to substrate.

Belongs to the eIF-2B alpha/beta/delta subunits family. R15P isomerase subfamily.

The enzyme catalyses alpha-D-ribose 1,5-bisphosphate = D-ribulose 1,5-bisphosphate. Catalyzes the isomerization of ribose 1,5-bisphosphate (R15P) to ribulose 1,5-bisphosphate (RuBP), the CO(2) acceptor and substrate for RubisCO. Functions in an archaeal AMP degradation pathway, together with AMP phosphorylase and RubisCO. The sequence is that of Ribose 1,5-bisphosphate isomerase from Pyrococcus furiosus (strain ATCC 43587 / DSM 3638 / JCM 8422 / Vc1).